Consider the following 339-residue polypeptide: Probable G-protein coupled receptor 33 (339 aa).

At 1–30 (MDLINSSTHVINVSTSLTNSTGVPTPAPKT) the chain is on the extracellular side. N-linked (GlcNAc...) asparagine glycosylation is found at Asn-5, Asn-12, and Asn-19. A helical membrane pass occupies residues 31-53 (IIAASLFMAFIIGVISNGLYLWM). Residues 54–64 (LQFKMQRTVNT) lie on the Cytoplasmic side of the membrane. A helical transmembrane segment spans residues 65–86 (LLFFHLILSYFISTLILPFMAT). The Extracellular segment spans residues 87-103 (SFLQDNHWVFGSVLCKA). Cys-101 and Cys-179 are disulfide-bonded. The chain crosses the membrane as a helical span at residues 104–124 (FNSTLSVSMFASVFFLSAISV). Residues 125–143 (ARYYLILHPVWSQQHRTPH) lie on the Cytoplasmic side of the membrane. Residues 144-165 (WASRIALQIWISATILSIPYLV) traverse the membrane as a helical segment. The Extracellular portion of the chain corresponds to 166-209 (FRTTHDDHKGRIKCQNNYIVSTDWESKEHQTLGQWIHAACFVGR). A helical transmembrane segment spans residues 210 to 230 (FLLGFLLPFLVIIFCYKRVAT). Residues 231-246 (KMKEKGLFKSSKPFKV) lie on the Cytoplasmic side of the membrane. A helical transmembrane segment spans residues 247–268 (MVTAVISFFVCWMPYHVHSGLV). The Extracellular segment spans residues 269-283 (LTKSQPLPLHLTLGL). The chain crosses the membrane as a helical span at residues 284–303 (AVVTISFNTVVSPVLYLFTG). At 304–339 (ENFKVFKKSILALFNSTFSDISSTERTQTLNSETEI) the chain is on the cytoplasmic side.

Belongs to the G-protein coupled receptor 1 family. In terms of tissue distribution, expressed predominantly in lung, spleen and testis.

The protein resides in the cell membrane. Its function is as follows. Orphan receptor; could be a chemoattractant receptor. This chain is Probable G-protein coupled receptor 33 (Gpr33), found in Mus musculus (Mouse).